A 601-amino-acid polypeptide reads, in one-letter code: Elongation factor 4 (601 aa).

Residues 7–189 (RNIRNFSIIA…AIVHRIPPPK (183 aa)) enclose the tr-type G domain. GTP contacts are provided by residues 19-24 (DHGKST) and 136-139 (NKID).

The protein belongs to the TRAFAC class translation factor GTPase superfamily. Classic translation factor GTPase family. LepA subfamily.

It is found in the cell inner membrane. It catalyses the reaction GTP + H2O = GDP + phosphate + H(+). Its function is as follows. Required for accurate and efficient protein synthesis under certain stress conditions. May act as a fidelity factor of the translation reaction, by catalyzing a one-codon backward translocation of tRNAs on improperly translocated ribosomes. Back-translocation proceeds from a post-translocation (POST) complex to a pre-translocation (PRE) complex, thus giving elongation factor G a second chance to translocate the tRNAs correctly. Binds to ribosomes in a GTP-dependent manner. The protein is Elongation factor 4 of Xanthomonas axonopodis pv. citri (strain 306).